A 906-amino-acid polypeptide reads, in one-letter code: Protein translocase subunit SecA (906 aa).

ATP is bound by residues Q87, 105-109 (GEGKT), and D513. Positions 860-906 (QVNKGEVVSDENTGDDTFVRNEKKVGRNEPCPCGSGKKYKQCHGKLD) are disordered. Basic and acidic residues predominate over residues 876–886 (TFVRNEKKVGR). Zn(2+) contacts are provided by C890, C892, C901, and H902. The span at 896–906 (KKYKQCHGKLD) shows a compositional bias: basic residues.

It belongs to the SecA family. Monomer and homodimer. Part of the essential Sec protein translocation apparatus which comprises SecA, SecYEG and auxiliary proteins SecDF-YajC and YidC. It depends on Zn(2+) as a cofactor.

The protein resides in the cell inner membrane. The protein localises to the cytoplasm. It catalyses the reaction ATP + H2O + cellular proteinSide 1 = ADP + phosphate + cellular proteinSide 2.. Its function is as follows. Part of the Sec protein translocase complex. Interacts with the SecYEG preprotein conducting channel. Has a central role in coupling the hydrolysis of ATP to the transfer of proteins into and across the cell membrane, serving both as a receptor for the preprotein-SecB complex and as an ATP-driven molecular motor driving the stepwise translocation of polypeptide chains across the membrane. The sequence is that of Protein translocase subunit SecA from Psychromonas ingrahamii (strain DSM 17664 / CCUG 51855 / 37).